The following is a 276-amino-acid chain: NADPH-dependent 7-cyano-7-deazaguanine reductase (276 aa).

80–82 lines the substrate pocket; the sequence is VES. 82–83 provides a ligand contact to NADPH; sequence SK. Cys-183 serves as the catalytic Thioimide intermediate. Asp-190 serves as the catalytic Proton donor. Position 222–223 (222–223) interacts with substrate; it reads HE. NADPH is bound at residue 251-252; it reads RG.

The protein belongs to the GTP cyclohydrolase I family. QueF type 2 subfamily. Homodimer.

Its subcellular location is the cytoplasm. It carries out the reaction 7-aminomethyl-7-carbaguanine + 2 NADP(+) = 7-cyano-7-deazaguanine + 2 NADPH + 3 H(+). Its pathway is tRNA modification; tRNA-queuosine biosynthesis. Catalyzes the NADPH-dependent reduction of 7-cyano-7-deazaguanine (preQ0) to 7-aminomethyl-7-deazaguanine (preQ1). The protein is NADPH-dependent 7-cyano-7-deazaguanine reductase of Burkholderia orbicola (strain MC0-3).